We begin with the raw amino-acid sequence, 432 residues long: Amino-acid acetyltransferase (432 aa).

In terms of domain architecture, N-acetyltransferase spans 286–425; the sequence is ESLREATIED…ASLYNYQRNS (140 aa).

It belongs to the acetyltransferase family. ArgA subfamily.

The protein localises to the cytoplasm. The enzyme catalyses L-glutamate + acetyl-CoA = N-acetyl-L-glutamate + CoA + H(+). It functions in the pathway amino-acid biosynthesis; L-arginine biosynthesis; N(2)-acetyl-L-ornithine from L-glutamate: step 1/4. The sequence is that of Amino-acid acetyltransferase from Ectopseudomonas mendocina (strain ymp) (Pseudomonas mendocina).